The sequence spans 971 residues: MSAGQAPKEIGEISFGLMDPEEYRDMSATKVITADTYDDDGFPIDMGLMDPRLGVIDPGLECKTCGQRSGGCNGHFGHIELAAPVIHVGFSKLIRRLLRGTCRECASLLLTEEEKDEYRENLDRTRSLRQDVSDVMTAAIREARKKDHCPHCGEVQYDVKHEKPTTYYEVQQVLASDYSERIAASMQPDEDEDDAGVSPQELAEQTDIDISRINEILSGEFRPRREDREAIETAIGADLTTEDMNKLMPSDIRDWFEDIPGEDLEALGVNSDRSRPEWMILTVLPVPPVTARPSITLDNGQRSEDDLTHKLVDIIRINQRFMENREAGAPQLIIEDLWELLQYHVTTFMDNEISGTPPARHRSGRPLKTLSQRLKGKEGRFRGSLSGKRVNFSARTVISPDPTLSLNEVGVPDRVATEMTQTMVVNEQNLERARRYVRNGPEGHPGANYVTRPDGRRVRVTEKVCEELAERVEPGWEVQRHLIDGDIIIFNRQPSLHRMSIMAHEVVVMPYKTFRLNTVVCPPYNADFDGDEMNMHALQNEEARAEARVLMRVQEQILSPRFGENIIGAIQDHISGTYLLTNDNPRFNETQASDLLRQTRIDELPAAAGTDEDGDQYWTGHQIFSELLPDDLSLEFTGTTGDTVVIEDGQLLEGTIADDEVGEYGSEIVDTITKVHGNTRARIFINEVASLAMRSIMHFGFSIGIDDETVSTEARERIDEAIQSAYDRVQELIETYENGDLESLPGRTVDETLEMKIMQTLGKARDSAGDVAEENFDEDNPAVVMANSGARGSMLNLTQMAGCVGQQAVRGERINRGYEDRTLSHFAPNDLSSEAHGFVENSYTSGLTPKEFFFHAMGGREGLVDTAVRTSKSGYLQRRLINALSELETQYDGTVRDTSDTIVQFEFGEDGTSPVQVSSNEEVDIDVEHVADRILNSEFDSDTQKAEFLEVEEPPTNLSEHGAAWEVESDD.

Met-1 carries the blocked amino end (Met) modification. Cys-62, Cys-65, Cys-72, His-75, Cys-102, Cys-105, Cys-149, and Cys-152 together coordinate Zn(2+). The segment at 185 to 204 (SMQPDEDEDDAGVSPQELAE) is disordered. Mg(2+) is bound by residues Asp-527, Asp-529, and Asp-531. A disordered region spans residues 951 to 971 (VEEPPTNLSEHGAAWEVESDD).

It belongs to the RNA polymerase beta' chain family. As to quaternary structure, part of the RNA polymerase complex. Mg(2+) serves as cofactor. Requires Zn(2+) as cofactor. The N-terminus is blocked.

Its subcellular location is the cytoplasm. The catalysed reaction is RNA(n) + a ribonucleoside 5'-triphosphate = RNA(n+1) + diphosphate. Its function is as follows. DNA-dependent RNA polymerase (RNAP) catalyzes the transcription of DNA into RNA using the four ribonucleoside triphosphates as substrates. Forms the clamp head domain. This Halobacterium salinarum (strain ATCC 29341 / DSM 671 / R1) protein is DNA-directed RNA polymerase subunit Rpo1N.